Consider the following 397-residue polypeptide: Argininosuccinate synthase (397 aa).

Position 9 to 17 (9 to 17 (AYSGGLDTT)) interacts with ATP. Tyr-87 lines the L-citrulline pocket. ATP is bound at residue Gly-117. Positions 119, 123, and 124 each coordinate L-aspartate. An L-citrulline-binding site is contributed by Asn-123. Arg-127, Ser-174, Ser-183, Glu-259, and Tyr-271 together coordinate L-citrulline.

Belongs to the argininosuccinate synthase family. Type 1 subfamily. As to quaternary structure, homotetramer.

It localises to the cytoplasm. It catalyses the reaction L-citrulline + L-aspartate + ATP = 2-(N(omega)-L-arginino)succinate + AMP + diphosphate + H(+). The protein operates within amino-acid biosynthesis; L-arginine biosynthesis; L-arginine from L-ornithine and carbamoyl phosphate: step 2/3. This Pyrobaculum aerophilum (strain ATCC 51768 / DSM 7523 / JCM 9630 / CIP 104966 / NBRC 100827 / IM2) protein is Argininosuccinate synthase.